Reading from the N-terminus, the 360-residue chain is Peptide chain release factor 1 (360 aa).

Q235 is subject to N5-methylglutamine. Residues K285 to D305 form a disordered region.

Belongs to the prokaryotic/mitochondrial release factor family. Post-translationally, methylated by PrmC. Methylation increases the termination efficiency of RF1.

It localises to the cytoplasm. In terms of biological role, peptide chain release factor 1 directs the termination of translation in response to the peptide chain termination codons UAG and UAA. The protein is Peptide chain release factor 1 of Proteus mirabilis (strain HI4320).